We begin with the raw amino-acid sequence, 175 residues long: Large ribosomal subunit protein bL17m (175 aa).

Residues methionine 1–alanine 8 constitute a mitochondrion transit peptide. The interval aspartate 155–isoleucine 175 is disordered. Polar residues predominate over residues glutamate 161–isoleucine 175.

It belongs to the bacterial ribosomal protein bL17 family. Component of the mitochondrial large ribosomal subunit (mt-LSU). Mature mammalian 55S mitochondrial ribosomes consist of a small (28S) and a large (39S) subunit. The 28S small subunit contains a 12S ribosomal RNA (12S mt-rRNA) and 30 different proteins. The 39S large subunit contains a 16S rRNA (16S mt-rRNA), a copy of mitochondrial valine transfer RNA (mt-tRNA(Val)), which plays an integral structural role, and 52 different proteins. In terms of tissue distribution, detected in adrenal gland, mammary gland and adipose tissue.

It localises to the mitochondrion. This chain is Large ribosomal subunit protein bL17m (MRPL17), found in Homo sapiens (Human).